Reading from the N-terminus, the 146-residue chain is Large ribosomal subunit protein uL15 (146 aa).

A compositionally biased stretch (basic and acidic residues) spans 1-13 (MKLNELHPSEGSR). The tract at residues 1–56 (MKLNELHPSEGSRHARKRVGRGTSSGFGKTSGRGQKGQHARSGGNTRLGFEGGQMP) is disordered. Over residues 23–35 (TSSGFGKTSGRGQ) the composition is skewed to gly residues.

Belongs to the universal ribosomal protein uL15 family. Part of the 50S ribosomal subunit.

Its function is as follows. Binds to the 23S rRNA. In Lactobacillus delbrueckii subsp. bulgaricus (strain ATCC 11842 / DSM 20081 / BCRC 10696 / JCM 1002 / NBRC 13953 / NCIMB 11778 / NCTC 12712 / WDCM 00102 / Lb 14), this protein is Large ribosomal subunit protein uL15.